The sequence spans 90 residues: Small ribosomal subunit protein uS19 (90 aa).

Belongs to the universal ribosomal protein uS19 family.

Protein S19 forms a complex with S13 that binds strongly to the 16S ribosomal RNA. In Mesomycoplasma hyopneumoniae (strain 232) (Mycoplasma hyopneumoniae), this protein is Small ribosomal subunit protein uS19.